The primary structure comprises 172 residues: Adenine phosphoribosyltransferase (172 aa).

It belongs to the purine/pyrimidine phosphoribosyltransferase family. In terms of assembly, homodimer.

The protein resides in the cytoplasm. It catalyses the reaction AMP + diphosphate = 5-phospho-alpha-D-ribose 1-diphosphate + adenine. The protein operates within purine metabolism; AMP biosynthesis via salvage pathway; AMP from adenine: step 1/1. Functionally, catalyzes a salvage reaction resulting in the formation of AMP, that is energically less costly than de novo synthesis. This is Adenine phosphoribosyltransferase from Staphylococcus aureus (strain bovine RF122 / ET3-1).